The following is a 255-amino-acid chain: Biotin carboxyl carrier protein of acetyl-CoA carboxylase 2, chloroplastic (255 aa).

The N-terminal 87 residues, 1-87, are a transit peptide targeting the chloroplast; the sequence is MASLSVPCVK…TNVPEPAELS (87 aa). A disordered region spans residues 148–193; that stretch reads PPAQPVALPPSPTPTSTPATAKPTSAPSSSHPPLKSPMAGTFYRSP. Pro residues predominate over residues 149-162; the sequence is PAQPVALPPSPTPT. Positions 163-180 are enriched in low complexity; the sequence is STPATAKPTSAPSSSHPP. Residues 178–254 enclose the Biotinyl-binding domain; it reads HPPLKSPMAG…SVDTPLFVIA (77 aa). K220 carries the N6-biotinyllysine modification.

In terms of assembly, acetyl-CoA carboxylase is a heterohexamer composed of biotin carboxyl carrier protein, biotin carboxylase and 2 subunits each of ACCase subunit alpha and ACCase plastid-coded subunit beta (accD). As to expression, primarily expressed in 7 to 10 days after flowering seeds at levels approximately 2-fold less abundant than BCCP1.

It localises to the plastid. The protein resides in the chloroplast. The protein operates within lipid metabolism; fatty acid biosynthesis. In terms of biological role, this protein is a component of the acetyl coenzyme A carboxylase complex; first, biotin carboxylase catalyzes the carboxylation of the carrier protein and then the transcarboxylase transfers the carboxyl group to form malonyl-CoA. This chain is Biotin carboxyl carrier protein of acetyl-CoA carboxylase 2, chloroplastic (BCCP2), found in Arabidopsis thaliana (Mouse-ear cress).